Reading from the N-terminus, the 1017-residue chain is Stereoselective keto-reductase af490 (1017 aa).

An N-terminal hotdog fold region spans residues 6 to 138; that stretch reads NELSGSQVPG…GRLRMTFAGH (133 aa). Residues 6–311 form the PKS/mFAS DH domain; the sequence is NELSGSQVPG…MSPIAPSTEK (306 aa). The segment at 8–306 is dehydratase (DH); that stretch reads LSGSQVPGAT…LEGLTMSPIA (299 aa). The C-terminal hotdog fold stretch occupies residues 153–311; the sequence is LRPVSISPFY…MSPIAPSTEK (159 aa). Residues 532 to 720 are ketoreductase (KR); the sequence is QIRFLRAPFD…VQGGRLLIPR (189 aa).

It carries out the reaction fumagillol + NADP(+) = 5-dehydrofumagillol + NADPH + H(+). The protein operates within secondary metabolite biosynthesis; terpenoid biosynthesis. Functionally, stereoselective keto-reductase; part of the gene cluster that mediates the biosynthesis of fumagillin, a meroterpenoid that has numerous biological activities including irreversible inhibition of human type 2 methionine aminopeptidase (METAP2). Within the pathway, the keto-reductase af490 acts as a 5-dehydrofumagillol 5-reductase that stereoselectively reduces 5-keto-fumagillol to 5R-hydroxy-seco-sesquiterpene. The pathway begins with the conversion of farnesyl pyrophosphate (FPP) to beta-trans-bergamotene by the membrane-bound beta-trans-bergamotene synthase af520. The multifunctional cytochrome P450 monooxygenase af510 then converts beta-trans-bergamotene into 5-keto-demethoxyfumagillol via several oxydation steps. 5-keto-demethoxyfumagillol is then subjected to successive C-6 hydroxylation and O-methylation by the dioxygenase af480 and O-methyltransferase af390-400, respectively, to yield 5-keto-fumagillol, which is then stereoselectively reduced by the keto-reductase af490 to 5R-hydroxy-seco-sesquiterpene. The next step is the polyketide transferase af380-catalyzed transfer of a dodecapentaenoyl group synthesized by the polyketide synthase af370 onto 5R-hydroxy-seco-sesquiterpene which leads to the production of prefumagillin. Finally, oxidative cleavage by the monooxygenase af470 converts prefumagillin to fumagillin. The sequence is that of Stereoselective keto-reductase af490 from Aspergillus fumigatus (strain ATCC MYA-4609 / CBS 101355 / FGSC A1100 / Af293) (Neosartorya fumigata).